A 339-amino-acid chain; its full sequence is RNA 3'-terminal phosphate cyclase (339 aa).

ATP-binding positions include Q101 and H283 to D286. Residue H307 is the Tele-AMP-histidine intermediate of the active site.

Belongs to the RNA 3'-terminal cyclase family. Type 1 subfamily.

The protein resides in the cytoplasm. The catalysed reaction is a 3'-end 3'-phospho-ribonucleotide-RNA + ATP = a 3'-end 2',3'-cyclophospho-ribonucleotide-RNA + AMP + diphosphate. In terms of biological role, catalyzes the conversion of 3'-phosphate to a 2',3'-cyclic phosphodiester at the end of RNA. The mechanism of action of the enzyme occurs in 3 steps: (A) adenylation of the enzyme by ATP; (B) transfer of adenylate to an RNA-N3'P to produce RNA-N3'PP5'A; (C) and attack of the adjacent 2'-hydroxyl on the 3'-phosphorus in the diester linkage to produce the cyclic end product. The biological role of this enzyme is unknown but it is likely to function in some aspects of cellular RNA processing. The protein is RNA 3'-terminal phosphate cyclase of Sulfurisphaera tokodaii (strain DSM 16993 / JCM 10545 / NBRC 100140 / 7) (Sulfolobus tokodaii).